Consider the following 287-residue polypeptide: Protease HtpX (287 aa).

2 helical membrane-spanning segments follow: residues 4 to 24 and 33 to 53; these read IFLLIVTNLAVLLVASIVMSI and GGLLVFAAIFGFGGAFISLAI. Histidine 139 contacts Zn(2+). The active site involves glutamate 140. Residue histidine 143 participates in Zn(2+) binding. The next 2 helical transmembrane spans lie at 154 to 174 and 195 to 215; these read LIQGVVNTFVIFAARVVAGII and AVVFVLDMLFGILASIIVAYF. Glutamate 220 provides a ligand contact to Zn(2+).

This sequence belongs to the peptidase M48B family. The cofactor is Zn(2+).

It is found in the cell inner membrane. The polypeptide is Protease HtpX (Shewanella oneidensis (strain ATCC 700550 / JCM 31522 / CIP 106686 / LMG 19005 / NCIMB 14063 / MR-1)).